The chain runs to 238 residues: NAD-dependent protein deacylase (238 aa).

The Deacetylase sirtuin-type domain maps to 1–237; that stretch reads MRGIMKVFVL…PAWVERLLAR (237 aa). NAD(+) is bound at residue 12-31; it reads GAGVSAESGLGTFRDKDGVW. Residues Y56 and R59 each coordinate substrate. 94–97 is a binding site for NAD(+); it reads QNVD. The active-site Proton acceptor is H112. C120, C123, C139, and C142 together coordinate Zn(2+). NAD(+) contacts are provided by residues 179-181, 205-207, and A223; these read GTS and NLE.

The protein belongs to the sirtuin family. Class III subfamily. Zn(2+) is required as a cofactor.

Its subcellular location is the cytoplasm. It carries out the reaction N(6)-acetyl-L-lysyl-[protein] + NAD(+) + H2O = 2''-O-acetyl-ADP-D-ribose + nicotinamide + L-lysyl-[protein]. The catalysed reaction is N(6)-succinyl-L-lysyl-[protein] + NAD(+) + H2O = 2''-O-succinyl-ADP-D-ribose + nicotinamide + L-lysyl-[protein]. NAD-dependent lysine deacetylase and desuccinylase that specifically removes acetyl and succinyl groups on target proteins. Modulates the activities of several proteins which are inactive in their acylated form. The chain is NAD-dependent protein deacylase from Caulobacter vibrioides (strain ATCC 19089 / CIP 103742 / CB 15) (Caulobacter crescentus).